A 69-amino-acid chain; its full sequence is Conotoxin AbVIE (69 aa).

Positions 1-17 are cleaved as a signal peptide; it reads VLIIAVLFLTACQLTTA. Positions 18–40 are excised as a propeptide; it reads ETSSRGKQKHRALRSTDKYSRMT. 3 disulfide bridges follow: C43-C57, C50-C61, and C56-C66.

This sequence belongs to the conotoxin O1 superfamily. As to expression, expressed by the venom duct.

It is found in the secreted. The sequence is that of Conotoxin AbVIE from Conus abbreviatus (Abbreviated cone).